Reading from the N-terminus, the 380-residue chain is Queuine tRNA-ribosyltransferase (380 aa).

The active-site Proton acceptor is the D96. Residues 96–100 (DSGGF), D150, Q193, and G220 each bind substrate. Residues 251 to 257 (GVGAPDS) form an RNA binding region. D270 serves as the catalytic Nucleophile. The interval 275–279 (TRIAR) is RNA binding; important for wobble base 34 recognition. Residues C308, C310, C313, and H339 each coordinate Zn(2+).

Belongs to the queuine tRNA-ribosyltransferase family. As to quaternary structure, homodimer. Within each dimer, one monomer is responsible for RNA recognition and catalysis, while the other monomer binds to the replacement base PreQ1. Zn(2+) serves as cofactor.

It carries out the reaction 7-aminomethyl-7-carbaguanine + guanosine(34) in tRNA = 7-aminomethyl-7-carbaguanosine(34) in tRNA + guanine. It functions in the pathway tRNA modification; tRNA-queuosine biosynthesis. Its function is as follows. Catalyzes the base-exchange of a guanine (G) residue with the queuine precursor 7-aminomethyl-7-deazaguanine (PreQ1) at position 34 (anticodon wobble position) in tRNAs with GU(N) anticodons (tRNA-Asp, -Asn, -His and -Tyr). Catalysis occurs through a double-displacement mechanism. The nucleophile active site attacks the C1' of nucleotide 34 to detach the guanine base from the RNA, forming a covalent enzyme-RNA intermediate. The proton acceptor active site deprotonates the incoming PreQ1, allowing a nucleophilic attack on the C1' of the ribose to form the product. After dissociation, two additional enzymatic reactions on the tRNA convert PreQ1 to queuine (Q), resulting in the hypermodified nucleoside queuosine (7-(((4,5-cis-dihydroxy-2-cyclopenten-1-yl)amino)methyl)-7-deazaguanosine). This Streptococcus sanguinis (strain SK36) protein is Queuine tRNA-ribosyltransferase.